A 1617-amino-acid polypeptide reads, in one-letter code: Mitogen-activated protein kinase kinae kinase bck1 (1617 aa).

Disordered stretches follow at residues 1–73, 167–199, 211–253, 345–399, 455–555, 568–633, 739–820, 832–1144, and 1165–1277; these read MDGQ…SQLQ, GPVH…RTMP, SVAS…GGMS, RQIH…SPNL, DHRR…SSSY, KRSK…LRGK, GVPL…ISPE, EHKR…RGDI, and IDLD…EILR. Over residues 19–28 the composition is skewed to low complexity; that stretch reads TQPSQSHMLS. A compositionally biased stretch (pro residues) spans 44–60; that stretch reads VMPPPPPGPPPGPPPGP. The span at 220–248 shows a compositional bias: polar residues; sequence TAQNHQSQTGQTNEPTKSPSHRQNNSNTL. A compositionally biased stretch (polar residues) spans 482 to 504; the sequence is KSGSPATQHATLNQGLSSSSTGD. The span at 524–533 shows a compositional bias: basic and acidic residues; it reads RYYESRKGQE. Composition is skewed to polar residues over residues 535 to 555 and 586 to 596; these read IRPS…SSSY and ESPTSPVNLRQ. Composition is skewed to basic and acidic residues over residues 832–841 and 871–885; these read EHKREVERKQ and FDER…KKAD. Polar residues-rich tracts occupy residues 897-907 and 956-980; these read PQESYTLTRIN and GGKQ…PQSS. Basic and acidic residues-rich tracts occupy residues 1128–1140 and 1189–1198; these read EDER…DSFA and PENDLHKKEN. 2 stretches are compositionally biased toward polar residues: residues 1199-1208 and 1257-1272; these read QPSSSYTGEM and NQAS…NQKS. In terms of domain architecture, Protein kinase spans 1323–1596; it reads IIRGQLIGKG…QTLLTRHPFC (274 aa). ATP-binding positions include 1329–1337 and Lys1352; that span reads IGKGTYGRV.

It belongs to the protein kinase superfamily. STE Ser/Thr protein kinase family. MAP kinase kinase kinase subfamily.

It catalyses the reaction L-seryl-[protein] + ATP = O-phospho-L-seryl-[protein] + ADP + H(+). It carries out the reaction L-threonyl-[protein] + ATP = O-phospho-L-threonyl-[protein] + ADP + H(+). Functionally, mitogen-activated protein kinase kinase kinase; part of cell wall integrity (CWI) signaling pathway composed of pkcA, the bck1-mkk2-mpka MAPK cascade and the downstream rlmA transcription regulator. The CWI signaling pathway regulates cell wall integrity and pyomelanin formation. CWI also controls oxidative stress response, gliotoxin production, iron adaptation and asexual development. Finally, CWI is constitutively required for A.fumigatus to cope with the temperature increase found in the mammalian lung environment, during infection. This Aspergillus fumigatus (strain ATCC MYA-4609 / CBS 101355 / FGSC A1100 / Af293) (Neosartorya fumigata) protein is Mitogen-activated protein kinase kinae kinase bck1.